Consider the following 620-residue polypeptide: MALLQIAEPGLSPQPHQRRLAVGIDLGTTNSLVAAVRSGLSEPLADAEGQVILPSAVRYHADRVEVGQAAKAAASQDPFNTVLSVKRLMGRGLSDVKQLGEQLPYRFVGGESHMPFIDTVQGAKSPVEVSADILKVLRQRAEAALGGELVGAVITVPAYFDDSQRQATKDAAKLAGLNVLRLLNEPTAAAVAYGLDQKAEGVIAIYDLGGGTFDISILRLTGGVFEVLATGGDTALGGDDFDHAIASWIVADAGLSADLDPSAQRSLLQAACSAKEALTDAEFVEVTHGEWRGTLTRDALNALIEPMIARSLKACRRAVRDTGIELEEVEAVVMVGGSTRVPRVREAVAELFGRQPLTQIDPDQVVAIGAAIQADTLAGNKRDGGELLLLDVIPLSLGLETMGGLMEKVIPRNTTIPVARGQEFTTYKDGQTAMKIHVLQGERELVSDCRSLARFELRGIPPMVAGAAKIRVTFQVDADGLLSVSAREMGSGIESSIQVKPSYGLTDDEVTRMLKDSFEYAGDDKVARVLREHQVDAERLLEAVQGALDADGERLLDEEERLVINLQMDELRELMQGTDGYAIEQQTKRLSQVTDAFAARRLDSTVKAALAGRNLNEIEE.

Belongs to the heat shock protein 70 family.

Chaperone involved in the maturation of iron-sulfur cluster-containing proteins. Has a low intrinsic ATPase activity which is markedly stimulated by HscB. In Pseudomonas syringae pv. tomato (strain ATCC BAA-871 / DC3000), this protein is Chaperone protein HscA homolog.